Consider the following 306-residue polypeptide: Pantothenate kinase (306 aa).

An ATP-binding site is contributed by 90-97 (GSVAVGKS).

Belongs to the prokaryotic pantothenate kinase family.

The protein localises to the cytoplasm. The catalysed reaction is (R)-pantothenate + ATP = (R)-4'-phosphopantothenate + ADP + H(+). Its pathway is cofactor biosynthesis; coenzyme A biosynthesis; CoA from (R)-pantothenate: step 1/5. The polypeptide is Pantothenate kinase (Listeria monocytogenes serotype 4b (strain CLIP80459)).